Here is a 722-residue protein sequence, read N- to C-terminus: Bifunctional UDP-N-acetylglucosamine 2-epimerase/N-acetylmannosamine kinase (722 aa).

Residues R19, S23, R113, H220, and N253 each coordinate UDP. CMP-N-acetyl-beta-neuraminate is bound by residues K259, E271, K280, and H281. UDP-binding residues include V282, S301, S302, E307, and R321. Positions T406–H722 are N-acetylmannosamine kinase. D413 serves as a coordination point for Mg(2+). Position 416 (G416) interacts with an N-acyl-D-mannosamine 6-phosphate. Positions 417, 418, and 420 each coordinate ADP. Residues G476, R477, T489, N516, D517, and G545 each contribute to the an N-acyl-D-mannosamine 6-phosphate site. An N-acyl-D-mannosamine-binding residues include G476, R477, T489, N516, and D517. D517 is an active-site residue. An N-acyl-D-mannosamine is bound by residues E566 and H569. H569 is a binding site for an N-acyl-D-mannosamine 6-phosphate. Zn(2+)-binding residues include H569, C579, C581, and C586. E588 contacts an N-acyl-D-mannosamine 6-phosphate. Residue E588 participates in an N-acyl-D-mannosamine binding.

In the N-terminal section; belongs to the UDP-N-acetylglucosamine 2-epimerase family. It in the C-terminal section; belongs to the ROK (NagC/XylR) family. As to quaternary structure, homodimer. Homotetramer. Homohexamer. The hexameric form exhibits both enzyme activities, whereas the dimeric form only catalyzes the phosphorylation of N-acyl-D-mannosamine. Post-translationally, phosphorylated. Phosphorylation by PKC activates the UDP-N-acetylglucosamine 2-epimerase activity.

It localises to the cytoplasm. The protein resides in the cytosol. The catalysed reaction is UDP-N-acetyl-alpha-D-glucosamine + H2O = aldehydo-N-acetyl-D-mannosamine + UDP + H(+). It carries out the reaction an N-acyl-D-mannosamine + ATP = an N-acyl-D-mannosamine 6-phosphate + ADP + H(+). It participates in amino-sugar metabolism; N-acetylneuraminate biosynthesis. With respect to regulation, the UDP-N-acetylglucosamine 2-epimerase activity, in contrast to the N-acetylmannosamine kinase activity, exhibits allosteric regulation by cytidine monophosphate-N-acetylneuraminic acid (CMP-Neu5Ac), the end product of neuraminic acid biosynthesis. Moreover, the activity is contingent upon the oligomeric state of the enzyme. The monomeric form is inactive, while the dimeric form selectively catalyzes the phosphorylation of N-acetylmannosamine. The hexameric form, on the other hand, demonstrates full proficiency in both enzyme activities. Furthermore, the UDP-N-acetylglucosamine 2-epimerase activity is increased by PKC-mediated phosphorylation. Bifunctional enzyme that possesses both UDP-N-acetylglucosamine 2-epimerase and N-acetylmannosamine kinase activities, and serves as the initiator of the biosynthetic pathway leading to the production of N-acetylneuraminic acid (NeuAc), a critical precursor in the synthesis of sialic acids. By catalyzing this pivotal and rate-limiting step in sialic acid biosynthesis, this enzyme assumes a pivotal role in governing the regulation of cell surface sialylation, playing a role in embryonic angiogenesis. Sialic acids represent a category of negatively charged sugars that reside on the surface of cells as terminal components of glycoconjugates and mediate important functions in various cellular processes, including cell adhesion, signal transduction, and cellular recognition. In Cricetulus griseus (Chinese hamster), this protein is Bifunctional UDP-N-acetylglucosamine 2-epimerase/N-acetylmannosamine kinase (GNE).